The sequence spans 333 residues: Large ribosomal subunit protein mL39 (333 aa).

In terms of domain architecture, TGS spans 56-122; sequence DKIEVRYLGL…QESCTLQLLN (67 aa). A disordered region spans residues 311 to 333; sequence SKKPSPARLPNEPFEEQQQLQLS.

The protein belongs to the mitochondrion-specific ribosomal protein mL39 family. As to quaternary structure, component of the mitochondrial ribosome large subunit (39S) which comprises a 16S rRNA and about 50 distinct proteins.

Its subcellular location is the mitochondrion. The chain is Large ribosomal subunit protein mL39 (mRpL39) from Drosophila melanogaster (Fruit fly).